The following is a 107-amino-acid chain: UPF0145 protein MAB_3451c (107 aa).

The protein belongs to the UPF0145 family.

In Mycobacteroides abscessus (strain ATCC 19977 / DSM 44196 / CCUG 20993 / CIP 104536 / JCM 13569 / NCTC 13031 / TMC 1543 / L948) (Mycobacterium abscessus), this protein is UPF0145 protein MAB_3451c.